The chain runs to 852 residues: Kinesin-like protein KIF18B (852 aa).

Residues 7–351 (TLQVVVRVRP…LKYADRAKEI (345 aa)) enclose the Kinesin motor domain. 109–116 (GATGAGKT) contacts ATP. Residues 366–393 (ISQYATICQQLQAEVAALRKKLQVYEGG) adopt a coiled-coil conformation. 2 disordered regions span residues 390-424 (YEGGGQPPPQDLPGSPKSGPPPEHQPCTPELPAGP) and 437-485 (QVER…RLTL). S404 is subject to Phosphoserine. Phosphothreonine is present on T417. Over residues 451–461 (QSPEDEDEGPA) the composition is skewed to acidic residues. Residues S452, S480, and S558 each carry the phosphoserine modification. 2 disordered regions span residues 575-594 (IPVPSPLCPEPPGYTGPVTR) and 602-689 (GPLH…SPRV). Residues 577-588 (VPSPLCPEPPGY) show a composition bias toward pro residues. A Nuclear localization signal motif is present at residues 624 to 632 (PMEKKRRRP). A phosphoserine mark is found at S633 and S639. Positions 653-656 (SFLP) match the MAPRE1-binding motif. Residue S662 is modified to Phosphoserine. Over residues 664–673 (PDTQPSQGPS) the composition is skewed to polar residues. The residue at position 674 (T674) is a Phosphothreonine. A KIF2C-binding region spans residues 711 to 736 (TPLALPTRDLNATFDLSEEPPSKPSF). The disordered stretch occupies residues 767–798 (MKGPKPTSSLPGTSACKKKRVASSSVSHGRSR). 2 consecutive short sequence motifs (MAPRE1-binding) follow at residues 774–777 (SSLP) and 800–803 (ARLP). Residue S822 is modified to Phosphoserine.

The protein belongs to the TRAFAC class myosin-kinesin ATPase superfamily. Kinesin family. In terms of assembly, interacts with MAPRE1; this interaction is required for efficient accumulation at microtubule plus ends. Interacts with KIF2C at microtubule tips; this interaction increases the affinity of both partners for microtubule plus ends and is required for robust microtubule depolymerization. KIF2C phosphorylation by AURKA or AURKB strongly reduces KIF18B-binding. Shows a prominent expression in the amygdala.

The protein localises to the nucleus. It is found in the cytoplasm. Its subcellular location is the cytoskeleton. Functionally, in complex with KIF2C, constitutes the major microtubule plus-end depolymerizing activity in mitotic cells. Its major role may be to transport KIF2C and/or MAPRE1 along microtubules. The sequence is that of Kinesin-like protein KIF18B (KIF18B) from Homo sapiens (Human).